The following is a 193-amino-acid chain: Ion-translocating oxidoreductase complex subunit A (193 aa).

Helical transmembrane passes span 5–25 (LLLF…FLGL), 47–67 (FVMT…LIPL), 72–92 (LRTL…EMVV), 102–122 (LLGI…VALL), 134–154 (ALYG…FAAI), and 171–191 (AIAL…SGLV).

It belongs to the NqrDE/RnfAE family. The complex is composed of six subunits: RsxA, RsxB, RsxC, RsxD, RsxE and RsxG.

The protein localises to the cell inner membrane. Part of a membrane-bound complex that couples electron transfer with translocation of ions across the membrane. Required to maintain the reduced state of SoxR. This is Ion-translocating oxidoreductase complex subunit A from Salmonella arizonae (strain ATCC BAA-731 / CDC346-86 / RSK2980).